Consider the following 377-residue polypeptide: All-trans-retinol dehydrogenase [NAD(+)] ADH4 (377 aa).

C47 is a Zn(2+) binding site. T49 provides a ligand contact to NAD(+). H68, C98, C101, C104, C112, and C179 together coordinate Zn(2+). NAD(+) contacts are provided by residues 204–209, D228, K233, 297–299, 320–322, and R372; these read GLGCVG, VGA, and TFF.

This sequence belongs to the zinc-containing alcohol dehydrogenase family. Class-II subfamily. As to quaternary structure, dimer. Zn(2+) serves as cofactor. Liver specific.

The protein resides in the cytoplasm. It catalyses the reaction all-trans-retinol + NAD(+) = all-trans-retinal + NADH + H(+). The enzyme catalyses 9-cis-retinol + NAD(+) = 9-cis-retinal + NADH + H(+). It carries out the reaction 20-hydroxy-(5Z,8Z,11Z,14Z)-eicosatetraenoate + NAD(+) = 20-oxo-(5Z,8Z,11Z,14Z)-eicosatetraenoate + NADH + H(+). The catalysed reaction is 20-oxo-(5Z,8Z,11Z,14Z)-eicosatetraenoate + NAD(+) + H2O = (5Z,8Z,11Z,14Z)-eicosatetraenedioate + NADH + 2 H(+). It catalyses the reaction 1,4-benzoquinone + NADH + H(+) = hydroquinone + NAD(+). Oxidation of 20-HETE is inhibited by low concentrations of N-heptylformamide. Oxidation of 20-HETE is a decreased by 55-65% by either all-trans-retinol or all-trans-retinoic acid. Strongly inhibited by omega-hydroxy fatty acids. Its function is as follows. Catalyzes the NAD-dependent oxidation of either all-trans-retinol or 9-cis-retinol. Also oxidizes long chain omega-hydroxy fatty acids, such as 20-HETE, producing both the intermediate aldehyde, 20-oxoarachidonate and the end product, a dicarboxylic acid, (5Z,8Z,11Z,14Z)-eicosatetraenedioate. Also catalyzes the reduction of benzoquinones. The polypeptide is All-trans-retinol dehydrogenase [NAD(+)] ADH4 (Mus musculus (Mouse)).